Here is a 312-residue protein sequence, read N- to C-terminus: Aspartate carbamoyltransferase catalytic subunit (312 aa).

Carbamoyl phosphate contacts are provided by Arg55 and Thr56. Residue Lys83 coordinates L-aspartate. Carbamoyl phosphate contacts are provided by Arg105, His138, and Gln141. L-aspartate contacts are provided by Arg171 and Arg225. Residues Gly266 and Pro267 each coordinate carbamoyl phosphate.

It belongs to the aspartate/ornithine carbamoyltransferase superfamily. ATCase family. In terms of assembly, heterododecamer (2C3:3R2) of six catalytic PyrB chains organized as two trimers (C3), and six regulatory PyrI chains organized as three dimers (R2).

The catalysed reaction is carbamoyl phosphate + L-aspartate = N-carbamoyl-L-aspartate + phosphate + H(+). The protein operates within pyrimidine metabolism; UMP biosynthesis via de novo pathway; (S)-dihydroorotate from bicarbonate: step 2/3. Functionally, catalyzes the condensation of carbamoyl phosphate and aspartate to form carbamoyl aspartate and inorganic phosphate, the committed step in the de novo pyrimidine nucleotide biosynthesis pathway. The chain is Aspartate carbamoyltransferase catalytic subunit from Corynebacterium glutamicum (strain ATCC 13032 / DSM 20300 / JCM 1318 / BCRC 11384 / CCUG 27702 / LMG 3730 / NBRC 12168 / NCIMB 10025 / NRRL B-2784 / 534).